The sequence spans 196 residues: ATP-dependent Clp protease proteolytic subunit (196 aa).

The active-site Nucleophile is the serine 96. Histidine 121 is a catalytic residue.

It belongs to the peptidase S14 family. As to quaternary structure, fourteen ClpP subunits assemble into 2 heptameric rings which stack back to back to give a disk-like structure with a central cavity, resembling the structure of eukaryotic proteasomes.

It localises to the cytoplasm. It carries out the reaction Hydrolysis of proteins to small peptides in the presence of ATP and magnesium. alpha-casein is the usual test substrate. In the absence of ATP, only oligopeptides shorter than five residues are hydrolyzed (such as succinyl-Leu-Tyr-|-NHMec, and Leu-Tyr-Leu-|-Tyr-Trp, in which cleavage of the -Tyr-|-Leu- and -Tyr-|-Trp bonds also occurs).. Its function is as follows. Cleaves peptides in various proteins in a process that requires ATP hydrolysis. Has a chymotrypsin-like activity. Plays a major role in the degradation of misfolded proteins. This Streptococcus pyogenes serotype M3 (strain SSI-1) protein is ATP-dependent Clp protease proteolytic subunit.